A 358-amino-acid chain; its full sequence is MERFQGHINPCFFDRKPDVRSLEVQGFAEAQSFAFKEKEEESLQDTVPFLQMLQSEDPSSFFSIKEPNFLTLLSLQTLKEPWELERYLSLEDSQFHSPVQSETNRFMEGANQAVSSQEIPFSQANMTLPSSTSSPLSAHSRRKRKINHLLPQEMTREKRKRRKTKPSKNNEEIENQRINHIAVERNRRRQMNEHINSLRALLPPSYIQRGDQASIVGGAINYVKVLEQIIQSLESQKRTQQQSNSEVVENALNHLSGISSNDLWTTLEDQTCIPKIEATVIQNHVSLKVQCEKKQGQLLKGIISLEKLKLTVLHLNITTSSHSSVSYSFNLKMEDECDLESADEITAAVHRIFDIPTI.

The interval asparagine 125–glutamine 176 is disordered. Positions threonine 127–serine 137 are enriched in low complexity. Positions glutamate 157–proline 166 are enriched in basic residues. Residues asparagine 175–leucine 226 form the bHLH domain.

Homodimer. In terms of tissue distribution, expressed constitutively in roots, leaves, stems, and flowers.

The protein resides in the nucleus. The protein is Transcription factor bHLH67 (BHLH67) of Arabidopsis thaliana (Mouse-ear cress).